Consider the following 147-residue polypeptide: FAD synthase (147 aa).

Residues 13-14 (TF), 18-21 (HEGH), aspartate 100, and phenylalanine 127 contribute to the ATP site.

This sequence belongs to the archaeal FAD synthase family. Homodimer. Requires a divalent metal cation as cofactor.

The enzyme catalyses FMN + ATP + H(+) = FAD + diphosphate. Its pathway is cofactor biosynthesis; FAD biosynthesis; FAD from FMN: step 1/1. Catalyzes the transfer of the AMP portion of ATP to flavin mononucleotide (FMN) to produce flavin adenine dinucleotide (FAD) coenzyme. The protein is FAD synthase of Korarchaeum cryptofilum (strain OPF8).